Reading from the N-terminus, the 150-residue chain is Probable NADH dehydrogenase [ubiquinone] 1 alpha subcomplex subunit 5 (150 aa).

This sequence belongs to the complex I NDUFA5 subunit family. In terms of assembly, complex I is composed of 45 different subunits.

It is found in the mitochondrion inner membrane. Functionally, accessory subunit of the mitochondrial membrane respiratory chain NADH dehydrogenase (Complex I), that is believed not to be involved in catalysis. Complex I functions in the transfer of electrons from NADH to the respiratory chain. The immediate electron acceptor for the enzyme is believed to be ubiquinone. The chain is Probable NADH dehydrogenase [ubiquinone] 1 alpha subcomplex subunit 5 from Caenorhabditis elegans.